The primary structure comprises 267 residues: 3-methyl-2-oxobutanoate hydroxymethyltransferase (267 aa).

Asp-46 and Asp-85 together coordinate Mg(2+). Residues 46-47, Asp-85, and Lys-115 contribute to the 3-methyl-2-oxobutanoate site; that span reads DS. Glu-117 lines the Mg(2+) pocket. Glu-184 serves as the catalytic Proton acceptor.

It belongs to the PanB family. In terms of assembly, homodecamer; pentamer of dimers. The cofactor is Mg(2+).

It localises to the cytoplasm. The catalysed reaction is 3-methyl-2-oxobutanoate + (6R)-5,10-methylene-5,6,7,8-tetrahydrofolate + H2O = 2-dehydropantoate + (6S)-5,6,7,8-tetrahydrofolate. It participates in cofactor biosynthesis; (R)-pantothenate biosynthesis; (R)-pantoate from 3-methyl-2-oxobutanoate: step 1/2. Catalyzes the reversible reaction in which hydroxymethyl group from 5,10-methylenetetrahydrofolate is transferred onto alpha-ketoisovalerate to form ketopantoate. This chain is 3-methyl-2-oxobutanoate hydroxymethyltransferase, found in Geotalea daltonii (strain DSM 22248 / JCM 15807 / FRC-32) (Geobacter daltonii).